A 207-amino-acid chain; its full sequence is Ribosomal RNA large subunit methyltransferase E (207 aa).

Residues G60, W62, D80, D96, and D121 each coordinate S-adenosyl-L-methionine. K161 functions as the Proton acceptor in the catalytic mechanism.

It belongs to the class I-like SAM-binding methyltransferase superfamily. RNA methyltransferase RlmE family.

The protein resides in the cytoplasm. It catalyses the reaction uridine(2552) in 23S rRNA + S-adenosyl-L-methionine = 2'-O-methyluridine(2552) in 23S rRNA + S-adenosyl-L-homocysteine + H(+). Specifically methylates the uridine in position 2552 of 23S rRNA at the 2'-O position of the ribose in the fully assembled 50S ribosomal subunit. This is Ribosomal RNA large subunit methyltransferase E from Pseudomonas paraeruginosa (strain DSM 24068 / PA7) (Pseudomonas aeruginosa (strain PA7)).